The chain runs to 290 residues: Homeobox protein HMX3-B (290 aa).

2 disordered regions span residues 1–41 (MADS…GSSK) and 96–169 (EKVN…KKKT). Residues 107–124 (LDRHTPDPPKSDQESKEE) are compositionally biased toward basic and acidic residues. Acidic residues predominate over residues 125-137 (SADDEIALEESDA). Residues 138–162 (EEPKKETDQEDDWMRKGEDLESDKK) are compositionally biased toward basic and acidic residues. The segment at residues 166–225 (KKKTRTVFSRSQVFQLESTFDIKRYLSSSERAGLAASLHLTETQVKIWFQNRRNKWKRQL) is a DNA-binding region (homeobox).

This sequence belongs to the HMX homeobox family. As to expression, expressed in the ear placode and vesicle and in cells forming the vestibulo-acoustic ganglion.

It is found in the nucleus. Transcription factor involved in specification of neuronal cell types and which is required for inner ear and hypothalamus development. Binds to the 5'-CAAGTG-3' core sequence. The chain is Homeobox protein HMX3-B (hmx3b) from Oryzias latipes (Japanese rice fish).